The primary structure comprises 514 residues: F-box-like/WD repeat-containing protein TBL1XR1 (514 aa).

Residue S2 is modified to N-acetylserine. Residues 4-36 (SSDEVNFLVYRYLQESGFSHSAFTFGIESHISQ) form the LisH domain. Residues 41–86 (GALVPPAALISIIQKGLQYVEAEVSINEDGTLFDGRPIESLSLIDA) form the F-box-like domain. K102 carries the N6-acetyllysine modification. The residue at position 119 (S119) is a Phosphoserine. A compositionally biased stretch (low complexity) spans 120–135 (QQGSAKNGENTANGEE). The disordered stretch occupies residues 120–139 (QQGSAKNGENTANGEENGAH). WD repeat units follow at residues 167 to 206 (GHES…TSGS), 223 to 262 (PSNK…ASTL), 264 to 303 (QHKG…AKQQ), 306 to 344 (FHSA…PIKT), 347 to 386 (GHTN…CVHD), 389 to 437 (AHNK…CIHT), 440 to 479 (KHQE…LVHS), and 481 to 513 (RGTG…LDLR). K277 is covalently cross-linked (Glycyl lysine isopeptide (Lys-Gly) (interchain with G-Cter in SUMO2)).

This sequence belongs to the WD repeat EBI family. In terms of assembly, component of the N-Cor repressor complex, at least composed of NCOR1, NCOR2, HDAC3, TBL1X, TBL1XR1, CORO2A and GPS2. Probable component of some E3 ubiquitin ligase complex. Interacts with histones H2B and H4. Interacts with MECP2; bridges interaction between MECP2 and NCOR1. Interacts with USP44. As to expression, widely expressed including the pituitary, hypothalamus, white and brown adipose tissue, muscle and liver.

It is found in the nucleus. F-box-like protein involved in the recruitment of the ubiquitin/19S proteasome complex to nuclear receptor-regulated transcription units. Plays an essential role in transcription activation mediated by nuclear receptors. Probably acts as integral component of the N-Cor corepressor complex that mediates the recruitment of the 19S proteasome complex, leading to the subsequent proteasomal degradation of N-Cor complex, thereby allowing cofactor exchange, and transcription activation. The polypeptide is F-box-like/WD repeat-containing protein TBL1XR1 (TBL1XR1) (Homo sapiens (Human)).